A 496-amino-acid chain; its full sequence is Adenosine transporter 1 (496 aa).

At 1 to 26 the chain is on the cytoplasmic side; it reads MSSHTSTPNHASAAPPRKWYDMTSAE. A helical membrane pass occupies residues 27-47; it reads FYVYVVAFMCGISMLMPINAV. Over 48–77 the chain is Extracellular; it reads FSAPSYMLQYYLYATKDPNHVPQMTNFWSN. The chain crosses the membrane as a helical span at residues 78-98; it reads VMTYYNLIGLVTGLVMEPLTL. Topologically, residues 99–107 are cytoplasmic; the sequence is LKSFRKIPM. A helical membrane pass occupies residues 108 to 128; the sequence is LVRLLGGLCILIVEIIVLMAV. Topologically, residues 129–135 are extracellular; sequence PARGTTE. A helical membrane pass occupies residues 136–156; the sequence is GGAVATMCIAGFIGGLGKSIF. Topologically, residues 157-172 are cytoplasmic; that stretch reads ESTVYGMFGAFPPSFT. The helical transmembrane segment at 173-193 threads the bilayer; the sequence is SIMMGGVGISGVLTSLIQIIV. The Extracellular segment spans residues 194–208; it reads KAALPDTYEGVKKQS. A helical transmembrane segment spans residues 209–229; it reads YIYYSLDVGIQAATFIALIMM. Residues 230 to 336 lie on the Cytoplasmic side of the membrane; it reads RFNSFAQLHF…SIISVLRSIK (107 aa). A helical transmembrane segment spans residues 337 to 357; it reads WMFVSCAFVFVVTLFLFPGIA. Topologically, residues 358-365 are extracellular; it reads TGMFPESK. The helical transmembrane segment at 366–386 threads the bilayer; the sequence is WFATVAVFIFNCCDVLGRVAP. The Cytoplasmic segment spans residues 387-399; sequence ALRFMWPRSYNQR. The chain crosses the membrane as a helical span at residues 400–420; that stretch reads WIIVAASFARVIFVPLLLLYS. At 421–431 the chain is on the extracellular side; that stretch reads YHYIPSEAYGY. The helical transmembrane segment at 432-452 threads the bilayer; that stretch reads VIMVIFGFSSGYVASMSLTLG. Residues 453–464 are Cytoplasmic-facing; it reads PQSKGIDNDGKR. The helical transmembrane segment at 465–485 threads the bilayer; sequence FVAGTLMGISILVGGTIGTVL. Over 486–496 the chain is Extracellular; the sequence is SIMTQTIREKY.

This sequence belongs to the SLC29A/ENT transporter (TC 2.A.57) family.

The protein resides in the membrane. It carries out the reaction adenosine(in) = adenosine(out). In terms of biological role, adenosine transporter. The polypeptide is Adenosine transporter 1 (Crithidia fasciculata).